The primary structure comprises 198 residues: HTH-type transcriptional regulator BetI (198 aa).

An HTH tetR-type domain is found at 8 to 68 (PLRRRELIDA…ATMRHLLREL (61 aa)). The H-T-H motif DNA-binding region spans 31-50 (TVAQIAHEAGVSPALAHHYF).

Its pathway is amine and polyamine biosynthesis; betaine biosynthesis via choline pathway [regulation]. Repressor involved in the biosynthesis of the osmoprotectant glycine betaine. It represses transcription of the choline transporter BetT and the genes of BetAB involved in the synthesis of glycine betaine. The sequence is that of HTH-type transcriptional regulator BetI from Brucella melitensis biotype 2 (strain ATCC 23457).